A 172-amino-acid chain; its full sequence is Large ribosomal subunit protein bL9 (172 aa).

Belongs to the bacterial ribosomal protein bL9 family.

In terms of biological role, binds to the 23S rRNA. The polypeptide is Large ribosomal subunit protein bL9 (Chlamydia caviae (strain ATCC VR-813 / DSM 19441 / 03DC25 / GPIC) (Chlamydophila caviae)).